The primary structure comprises 48 residues: Small polypeptide DEVIL 14 (48 aa).

Residues 4–23 form a helical membrane-spanning segment; it reads TVVLRCCTSVTKVRTWKRCS. Residues 17 to 48 are required for DVL/RTFL small polypeptide activity; it reads RTWKRCSKQIKEQRARLYIIWKCAVFLLSSHD.

Belongs to the DVL/RTFL small polypeptides family.

It is found in the cell membrane. In terms of biological role, small polypeptide acting as a regulatory molecule which coordinates cellular responses required for differentiation, growth and development, probably by restricting polar cell proliferation in lateral organs and coordinating socket cell recruitment and differentiation at trichome sites. This is Small polypeptide DEVIL 14 from Arabidopsis thaliana (Mouse-ear cress).